Here is a 410-residue protein sequence, read N- to C-terminus: Exopolygalacturonase (410 aa).

The first 22 residues, 1–22, serve as a signal peptide directing secretion; the sequence is MACTNNAMRALFLLVLFCIVHG. An N-linked (GlcNAc...) asparagine glycan is attached at Asn-89. PbH1 repeat units follow at residues 192–218, 219–240, 242–262, 272–293, and 337–377; these read CKDM…HMGD, SSGI…SIGP, TSKV…SIGS, VTDI…RIKA, and ASKV…TMDD. The Proton donor role is filled by Asp-233. Cysteines 235 and 252 form a disulfide. Asn-246 carries N-linked (GlcNAc...) asparagine glycosylation. His-256 is a catalytic residue. An N-linked (GlcNAc...) asparagine glycan is attached at Asn-349. A disulfide bond links Cys-364 and Cys-370. Residue Asn-387 is glycosylated (N-linked (GlcNAc...) asparagine). Residues Cys-393 and Cys-409 are joined by a disulfide bond.

This sequence belongs to the glycosyl hydrolase 28 family. Pollen.

The protein localises to the secreted. It localises to the cell wall. It carries out the reaction [(1-&gt;4)-alpha-D-galacturonosyl](n) + H2O = alpha-D-galacturonate + [(1-&gt;4)-alpha-D-galacturonosyl](n-1). Functionally, may function in depolymerizing pectin during pollen development, germination, and tube growth. Acts as an exo-polygalacturonase. This chain is Exopolygalacturonase (PG1), found in Zea mays (Maize).